Reading from the N-terminus, the 232-residue chain is Ashwin (232 aa).

2 stretches are compositionally biased toward basic and acidic residues: residues Asp64–Arg97 and Lys116–Arg127. Residues Asp64–Pro232 are disordered. Over residues Pro130–Arg140 the composition is skewed to polar residues. A Phosphoserine modification is found at Ser143. Over residues Asp144–Ser156 the composition is skewed to low complexity. Over residues Lys163–His179 the composition is skewed to basic and acidic residues. A phosphoserine mark is found at Ser182, Ser189, and Ser193. Thr198 is subject to Phosphothreonine.

It belongs to the ashwin family. Component of the tRNA-splicing ligase complex.

The protein localises to the nucleus. In Bos taurus (Bovine), this protein is Ashwin.